Consider the following 701-residue polypeptide: Elongation factor G (701 aa).

The 283-residue stretch at 8 to 290 (TQYRNIGISA…AIIEYLPSPK (283 aa)) folds into the tr-type G domain. GTP contacts are provided by residues 17-24 (AHIDAGKT), 88-92 (DTPGH), and 142-145 (NKMD).

This sequence belongs to the TRAFAC class translation factor GTPase superfamily. Classic translation factor GTPase family. EF-G/EF-2 subfamily.

It localises to the cytoplasm. Catalyzes the GTP-dependent ribosomal translocation step during translation elongation. During this step, the ribosome changes from the pre-translocational (PRE) to the post-translocational (POST) state as the newly formed A-site-bound peptidyl-tRNA and P-site-bound deacylated tRNA move to the P and E sites, respectively. Catalyzes the coordinated movement of the two tRNA molecules, the mRNA and conformational changes in the ribosome. This Buchnera aphidicola subsp. Cinara cedri (strain Cc) protein is Elongation factor G.